Consider the following 258-residue polypeptide: Acetylglutamate kinase (258 aa).

Substrate contacts are provided by residues 41–42, Arg-63, and Asn-156; that span reads GG.

Belongs to the acetylglutamate kinase family. ArgB subfamily.

The protein resides in the cytoplasm. The catalysed reaction is N-acetyl-L-glutamate + ATP = N-acetyl-L-glutamyl 5-phosphate + ADP. The protein operates within amino-acid biosynthesis; L-arginine biosynthesis; N(2)-acetyl-L-ornithine from L-glutamate: step 2/4. Functionally, catalyzes the ATP-dependent phosphorylation of N-acetyl-L-glutamate. In Geobacillus thermodenitrificans (strain NG80-2), this protein is Acetylglutamate kinase.